A 236-amino-acid chain; its full sequence is NEP1-interacting protein 1 (236 aa).

Residues 1–44 (MASSRFQSGFCPISSCPSLENFIERIKDACRFTLSAVLGTILSA) are Lumenal, thylakoid-facing. A helical transmembrane segment spans residues 45-65 (VLTFFFALVGTLLGALTGALI). Topologically, residues 66–78 (GQETESGFIRGAA) are stromal. Residues 79 to 99 (VGAISGAVFSIEVFESSLVLW) traverse the membrane as a helical segment. At 100-104 (KSNES) the chain is on the lumenal, thylakoid side. A helical membrane pass occupies residues 105-125 (RFGCLLYLIDVIVSLISGRLV). Residues 126-236 (RERIGPAMLS…GSCPMCRRDL (111 aa)) are Stromal-facing. The segment at 191-233 (CSVCLQDFQLGETVRSLPHCHHMFHLPCIDNWLFRHGSCPMCR) adopts an RING-type; atypical zinc-finger fold.

Belongs to the RING-type zinc finger family. NIP subfamily. In terms of assembly, interacts with RPOT2.

The protein resides in the plastid. The protein localises to the chloroplast thylakoid membrane. Its function is as follows. Intrinsic thylakoid membrane protein that fixes RPOT2 on the stromal side of the thylakoid membrane. The polypeptide is NEP1-interacting protein 1 (NIP1) (Arabidopsis thaliana (Mouse-ear cress)).